A 557-amino-acid chain; its full sequence is Ribonuclease J 2 (557 aa).

4 residues coordinate Zn(2+): histidine 76, histidine 78, histidine 144, and glutamate 166. Position 366–370 (366–370) interacts with substrate; the sequence is HASSH.

It belongs to the metallo-beta-lactamase superfamily. RNA-metabolizing metallo-beta-lactamase-like family. Bacterial RNase J subfamily. In terms of assembly, homodimer, may be a subunit of the RNA degradosome. The cofactor is Zn(2+).

The protein localises to the cytoplasm. Its function is as follows. An RNase that has 5'-3' exonuclease and possibly endoonuclease activity. Involved in maturation of rRNA and in some organisms also mRNA maturation and/or decay. In Staphylococcus saprophyticus subsp. saprophyticus (strain ATCC 15305 / DSM 20229 / NCIMB 8711 / NCTC 7292 / S-41), this protein is Ribonuclease J 2.